A 271-amino-acid chain; its full sequence is 5-amino-6-(5-phospho-D-ribitylamino)uracil phosphatase YbjI (271 aa).

D9 acts as the Nucleophile in catalysis. D9 is a binding site for Mg(2+). M10 contributes to the phosphate binding site. A Mg(2+)-binding site is contributed by D11. Residues 44–45 and K192 each bind phosphate; that span reads SG. D215 contributes to the Mg(2+) binding site. N218 lines the phosphate pocket.

It belongs to the HAD-like hydrolase superfamily. Cof family. Mg(2+) is required as a cofactor. The cofactor is Mn(2+). It depends on Co(2+) as a cofactor. Requires Zn(2+) as cofactor.

It carries out the reaction 5-amino-6-(5-phospho-D-ribitylamino)uracil + H2O = 5-amino-6-(D-ribitylamino)uracil + phosphate. Its pathway is cofactor biosynthesis; riboflavin biosynthesis; 5-amino-6-(D-ribitylamino)uracil from GTP: step 4/4. In terms of biological role, catalyzes the dephosphorylation of 5-amino-6-(5-phospho-D-ribitylamino)uracil, and thus could be involved in the riboflavin biosynthesis pathway. Is also able to dephosphorylate flavin mononucleotide (FMN), erythrose 4-phosphate and other phosphoric acid esters. The polypeptide is 5-amino-6-(5-phospho-D-ribitylamino)uracil phosphatase YbjI (ybjI) (Escherichia coli (strain K12)).